We begin with the raw amino-acid sequence, 413 residues long: Heparan-sulfate 6-O-sulfotransferase 1-A (413 aa).

Over 9-15 the chain is Cytoplasmic; that stretch reads MVERSSK. The chain crosses the membrane as a helical; Signal-anchor for type II membrane protein span at residues 16 to 36; sequence FLFIVVGSVLFMLILYQYVAP. The Lumenal segment spans residues 37-413; the sequence is GMMNFGSPHG…DYMNHIINRW (377 aa). A 3'-phosphoadenylyl sulfate-binding site is contributed by 92-100; it reads HIQKTGGTT. Residues 122–123, Arg139, Trp144, and His149 contribute to the substrate site; that span reads KK. The Proton acceptor role is filled by His149. 3'-phosphoadenylyl sulfate contacts are provided by Arg183 and Ser191. Substrate is bound by residues His195 and Trp202. N-linked (GlcNAc...) asparagine glycosylation occurs at Asn262. 315–317 lines the 3'-phosphoadenylyl sulfate pocket; sequence MQY. Asn318 carries N-linked (GlcNAc...) asparagine glycosylation. 321–322 is a 3'-phosphoadenylyl sulfate binding site; that stretch reads RA. The N-linked (GlcNAc...) asparagine glycan is linked to Asn329. The interval 374 to 401 is disordered; it reads PLFPFRRTSSSDSTFRDDAPESEGSRLP.

Belongs to the sulfotransferase 6 family. During somitogenesis, first expressed in polster and presumptive forebrain. During mid-somitogenesis, expressed in eye, hindbrain and anterior spinal cord. During late somitogenesis, strong expression in eye and hindbrain, decreased levels in midbrain and anterior spinal cord. At 24 hours post-fertilization (hpf), expressed in neural retina and lens, brain and anterior spinal cord. At 36 hpf, retinal expression is confined to the ciliary marginal zone and there is strong expression in tectum, rhombomeres and otic vesicle. At 48 hpf, expressed in retinal ganglion cells and in tectum, rhombomeres and pectoral fin. Not detected in the vasculature during embryogenesis.

It localises to the membrane. It catalyses the reaction alpha-D-glucosaminyl-[heparan sulfate](n) + 3'-phosphoadenylyl sulfate = 6-sulfo-alpha-D-glucosaminyl-[heparan sulfate](n) + adenosine 3',5'-bisphosphate + H(+). Its function is as follows. 6-O-sulfation enzyme which catalyzes the transfer of sulfate from 3'-phosphoadenosine 5'-phosphosulfate (PAPS) to position 6 of the N-sulfoglucosamine residue (GlcNS) of heparan sulfate. The protein is Heparan-sulfate 6-O-sulfotransferase 1-A of Danio rerio (Zebrafish).